The chain runs to 348 residues: Probable tRNA pseudouridine synthase B (348 aa).

D93 acts as the Nucleophile in catalysis. Positions 260 to 335 constitute a PUA domain; sequence LKKIYILDSA…IAVDIERVFM (76 aa).

The protein belongs to the pseudouridine synthase TruB family. Type 2 subfamily.

The catalysed reaction is uridine(55) in tRNA = pseudouridine(55) in tRNA. Could be responsible for synthesis of pseudouridine from uracil-55 in the psi GC loop of transfer RNAs. This Nanoarchaeum equitans (strain Kin4-M) protein is Probable tRNA pseudouridine synthase B.